Reading from the N-terminus, the 250-residue chain is Ribosomal RNA small subunit methyltransferase J (250 aa).

Residues Arg96 to Asp97 and Asp168 contribute to the S-adenosyl-L-methionine site.

It belongs to the methyltransferase superfamily. RsmJ family.

The protein localises to the cytoplasm. It carries out the reaction guanosine(1516) in 16S rRNA + S-adenosyl-L-methionine = N(2)-methylguanosine(1516) in 16S rRNA + S-adenosyl-L-homocysteine + H(+). Functionally, specifically methylates the guanosine in position 1516 of 16S rRNA. The protein is Ribosomal RNA small subunit methyltransferase J of Neisseria gonorrhoeae (strain NCCP11945).